We begin with the raw amino-acid sequence, 1637 residues long: Glutamate rich 3 (1637 aa).

Disordered stretches follow at residues 145 to 192 (PLTL…GSLL), 408 to 453 (PSST…KESC), 478 to 814 (EWKG…QDAG), 1111 to 1194 (VGTS…SPRE), 1238 to 1445 (IEKV…SGER), and 1457 to 1637 (KAEN…RETA). The span at 169 to 185 (LLSSRQTRNGSKITSGS) shows a compositional bias: polar residues. 3 stretches are compositionally biased toward basic and acidic residues: residues 416–426 (EKITEKKEEPP), 443–452 (KRNEMERKES), and 478–487 (EWKGKSGRDV). Residues 500–523 (YEEDFEVDDEKQDEKVDEDEDQAD) are compositionally biased toward acidic residues. Residues 534–557 (TESEKDNRNPEKKIETSSEKAHDS) are compositionally biased toward basic and acidic residues. The span at 558-572 (ENEDTGCSDSEEDDR) shows a compositional bias: acidic residues. Low complexity-rich tracts occupy residues 579-590 (SSISSRSHPYSS) and 608-617 (EEGSSRSSSS). Basic and acidic residues-rich tracts occupy residues 619 to 638 (DLRE…KYLE), 677 to 693 (ESEH…EVRA), 769 to 802 (QEMH…ESGM), 1115 to 1130 (EVKE…KTDG), 1264 to 1307 (LKTE…KDVE), 1319 to 1329 (KLLEDPPKERA), 1342 to 1357 (SPKE…KGGE), and 1402 to 1412 (RCEEWAAKELD). The segment covering 1476–1487 (VTGSLTGQNWNM) has biased composition (polar residues). 3 stretches are compositionally biased toward basic and acidic residues: residues 1550-1568 (AEER…KVAV), 1589-1599 (AQDREGGETKA), and 1614-1637 (GKDE…RETA).

It localises to the cell projection. The protein resides in the cilium. It is found in the cytoplasm. Component of the primary cilium that controls cilium formation and length. May function within retrograde intraflagellar transport (IFT)-associated pathways to remove signaling proteins from primary cilia. Also involved in neuronal vesicle biogenesis and neurotransmitter vesicular function. This is Glutamate rich 3 from Mus musculus (Mouse).